An 858-amino-acid chain; its full sequence is Transcription factor pytR (858 aa).

Residues 1 to 35 (MAHFSRVASDPSLAPQPSAPSGLDSSTTSSSSTGL) form a disordered region. The segment at residues 39–65 (CTFCRARKIRCSSGPICSACRERNINC) is a DNA-binding region (zn(2)-C6 fungal-type). The segment at 72–99 (RKGRPRRRGTNTSNAQAKKGDQENPTLG) is disordered.

The protein localises to the nucleus. In terms of biological role, transcription factor that regulates the expression of the gene cluster that mediates the biosynthesis of Pyranterreones, a family of antioxidative compounds. This chain is Transcription factor pytR, found in Aspergillus terreus (strain NIH 2624 / FGSC A1156).